A 264-amino-acid chain; its full sequence is Acyl-[acyl-carrier-protein]--UDP-N-acetylglucosamine O-acyltransferase (264 aa).

Belongs to the transferase hexapeptide repeat family. LpxA subfamily. As to quaternary structure, homotrimer.

The protein resides in the cytoplasm. The catalysed reaction is a (3R)-hydroxyacyl-[ACP] + UDP-N-acetyl-alpha-D-glucosamine = a UDP-3-O-[(3R)-3-hydroxyacyl]-N-acetyl-alpha-D-glucosamine + holo-[ACP]. It participates in glycolipid biosynthesis; lipid IV(A) biosynthesis; lipid IV(A) from (3R)-3-hydroxytetradecanoyl-[acyl-carrier-protein] and UDP-N-acetyl-alpha-D-glucosamine: step 1/6. Its function is as follows. Involved in the biosynthesis of lipid A, a phosphorylated glycolipid that anchors the lipopolysaccharide to the outer membrane of the cell. The chain is Acyl-[acyl-carrier-protein]--UDP-N-acetylglucosamine O-acyltransferase from Haemophilus ducreyi (strain 35000HP / ATCC 700724).